Here is a 178-residue protein sequence, read N- to C-terminus: Probetacellulin (178 aa).

A signal peptide spans 1-31 (MDRAARCSGASSLPLLLALALGLVILHCVVA). At 32–118 (DGNSTRSPET…LFYLRGDRGQ (87 aa)) the chain is on the extracellular side. N-linked (GlcNAc...) asparagine glycosylation is present at N34. Positions 65-105 (HFSRCPKQYKHYCIKGRCRFVVAEQTPSCVCDEGYIGARCE) constitute an EGF-like domain. 3 cysteine pairs are disulfide-bonded: C69–C82, C77–C93, and C95–C104. A propeptide spans 112–178 (LRGDRGQILV…NEDIEETNIA (67 aa)) (removed in mature form). A helical transmembrane segment spans residues 119 to 139 (ILVICLIAVMVVFIILVIGVC). Topologically, residues 140–178 (TCCHPLRKRRKRKKKEEEMETLGKDITPINEDIEETNIA) are cytoplasmic.

In terms of assembly, monomer. Interacts with EGFR and ERBB4. Synthesized in several tissues and tumor cells. Predominantly expressed in pancreas and small intestine.

Its subcellular location is the secreted. It is found in the extracellular space. The protein localises to the cell membrane. Growth factor that binds to EGFR, ERBB4 and other EGF receptor family members. Potent mitogen for retinal pigment epithelial cells and vascular smooth muscle cells. The polypeptide is Probetacellulin (BTC) (Homo sapiens (Human)).